A 444-amino-acid polypeptide reads, in one-letter code: MLPSKLHALFCLCTCLALVYPFDWQDLNPVAYIESPAWVSKIQALMAAANIGQSKIPRGNGSYSVGCTDLMFDYTNKGTFLRLYYPSQDDDHSDTLWIPNKEYFLGLSKFLGTHWLVGKIMGLFFGSMTTPAAWNAHLRTGEKYPLIIFSHGLGAFRTIYSAIGIDLASHGFIVAAVEHRDGSASSTYYFKDQSAVEIGNKSWLYLRTLKRGEEEFPLRNEQLRQRAKECSQALSLILDIDHGRPVTNVLDLEFDVEQLKDSIDRDKIAIIGHSFGGATVIQTLSEDQRFRCGIALDAWMFPVGDEVYSRIPQPLFFINSERFQYPSNIIRMKKCFLPDRERKMITIRGSVHQNFVDFTFATSKIIGYLFTLKGDIDSNVAISLSNKASLAFLQKHLGLQKDFDQWDSLVEGEDHNLIPGTNINTTNHQAILQNSTGIERPNLD.

A signal peptide spans 1–21 (MLPSKLHALFCLCTCLALVYP). N-linked (GlcNAc...) asparagine glycosylation is found at Asn-60 and Asn-200. Ser-274 serves as the catalytic Nucleophile. Active-site charge relay system residues include Asp-297 and His-352. N-linked (GlcNAc...) asparagine glycosylation is found at Asn-424 and Asn-434.

This sequence belongs to the AB hydrolase superfamily. Lipase family. In terms of processing, N-glycosylated. As to expression, plasma.

It is found in the secreted. Its subcellular location is the extracellular space. It catalyses the reaction a 1-O-alkyl-2-acetyl-sn-glycero-3-phosphocholine + H2O = a 1-O-alkyl-sn-glycero-3-phosphocholine + acetate + H(+). The enzyme catalyses 1-O-decyl-2-acetyl-sn-glycero-3-phosphocholine + H2O = 1-O-decyl-sn-glycero-3-phosphocholine + acetate + H(+). It carries out the reaction 1-O-dodecyl-2-acetyl-sn-glycero-3-phosphocholine + H2O = 1-O-dodecyl-sn-glycero-3-phosphocholine + acetate + H(+). The catalysed reaction is 1-O-tetradecyl-2-acetyl-sn-glycero-3-phosphocholine + H2O = 1-O-tetradecyl-sn-glycero-3-phosphocholine + acetate + H(+). It catalyses the reaction 1-O-hexadecyl-2-acetyl-sn-glycero-3-phosphocholine + H2O = 1-O-hexadecyl-sn-glycero-3-phosphocholine + acetate + H(+). The enzyme catalyses 1-O-octadecyl-2-acetyl-sn-glycero-3-phosphocholine + H2O = 1-O-octadecyl-sn-glycero-3-phosphocholine + acetate + H(+). It carries out the reaction 1-hexadecanoyl-2-acetyl-sn-glycero-3-phosphocholine + H2O = 1-hexadecanoyl-sn-glycero-3-phosphocholine + acetate + H(+). The catalysed reaction is 1-hexadecanoyl-2-propionyl-sn-glycero-3-phosphocholine + H2O = propanoate + 1-hexadecanoyl-sn-glycero-3-phosphocholine + H(+). It catalyses the reaction 1-hexadecanoyl-2-butanoyl-sn-glycero-3-phosphocholine + H2O = butanoate + 1-hexadecanoyl-sn-glycero-3-phosphocholine + H(+). The enzyme catalyses 1-hexadecanoyl-2-pentanoyl-sn-glycero-3-phosphocholine + H2O = pentanoate + 1-hexadecanoyl-sn-glycero-3-phosphocholine + H(+). It carries out the reaction 1-hexadecanoyl-2-glutaroyl-sn-glycero-3-phosphocholine + H2O = glutarate + 1-hexadecanoyl-sn-glycero-3-phosphocholine + H(+). The catalysed reaction is 1-hexadecanoyl-2-(5-oxopentanoyl)-sn-glycero-3-phosphocholine + H2O = 5-oxopentanoate + 1-hexadecanoyl-sn-glycero-3-phosphocholine + H(+). It catalyses the reaction 1-hexadecanoyl-2-(9-oxononanoyl)-sn-glycero-3-phosphocholine + H2O = 9-oxononanoate + 1-hexadecanoyl-sn-glycero-3-phosphocholine + H(+). The enzyme catalyses 1-hexadecanoyl-2-[9-hydroperoxy-(10E-octadecenoyl)]-sn-glycero-3-phosphocholine + H2O = 9-hydroperoxy-10E-octadecenoate + 1-hexadecanoyl-sn-glycero-3-phosphocholine + H(+). It carries out the reaction 1-hexadecanoyl-2-(10-hydroperoxy-8E-octadecenoyl)-sn-glycero-3-phosphocholine + H2O = 10-hydroperoxy-(8E)-octadecenoate + 1-hexadecanoyl-sn-glycero-3-phosphocholine + H(+). Lipoprotein-associated calcium-independent phospholipase A2 involved in phospholipid catabolism during inflammatory and oxidative stress response. At the lipid-aqueous interface, hydrolyzes the ester bond of fatty acyl group attached at sn-2 position of phospholipids (phospholipase A2 activity). Specifically targets phospholipids with a short-chain fatty acyl group at sn-2 position. Can hydrolyze phospholipids with long fatty acyl chains, only if they carry oxidized functional groups. Hydrolyzes and inactivates platelet-activating factor (PAF, 1-O-alkyl-2-acetyl-sn-glycero-3-phosphocholine), a potent pro-inflammatory signaling lipid that acts through PTAFR on various innate immune cells. Hydrolyzes oxidatively truncated phospholipids carrying an aldehyde group at omega position, preventing their accumulation in low-density lipoprotein (LDL) particles and uncontrolled pro-inflammatory effects. As part of high-density lipoprotein (HDL) particles, can hydrolyze phospholipids having long-chain fatty acyl hydroperoxides at sn-2 position and protect against potential accumulation of these oxylipins in the vascular wall. Catalyzes the release from membrane phospholipids of F2-isoprostanes, lipid biomarkers of cellular oxidative damage. The chain is Platelet-activating factor acetylhydrolase (PLA2G7) from Bos taurus (Bovine).